A 381-amino-acid polypeptide reads, in one-letter code: UDP-N-acetylglucosamine--N-acetylmuramyl-(pentapeptide) pyrophosphoryl-undecaprenol N-acetylglucosamine transferase (381 aa).

UDP-N-acetyl-alpha-D-glucosamine-binding positions include 10 to 12 (TGG), Asn-124, Arg-165, Ser-207, Ile-263, and Gln-308.

The protein belongs to the glycosyltransferase 28 family. MurG subfamily.

It localises to the cell inner membrane. The enzyme catalyses di-trans,octa-cis-undecaprenyl diphospho-N-acetyl-alpha-D-muramoyl-L-alanyl-D-glutamyl-meso-2,6-diaminopimeloyl-D-alanyl-D-alanine + UDP-N-acetyl-alpha-D-glucosamine = di-trans,octa-cis-undecaprenyl diphospho-[N-acetyl-alpha-D-glucosaminyl-(1-&gt;4)]-N-acetyl-alpha-D-muramoyl-L-alanyl-D-glutamyl-meso-2,6-diaminopimeloyl-D-alanyl-D-alanine + UDP + H(+). It participates in cell wall biogenesis; peptidoglycan biosynthesis. Cell wall formation. Catalyzes the transfer of a GlcNAc subunit on undecaprenyl-pyrophosphoryl-MurNAc-pentapeptide (lipid intermediate I) to form undecaprenyl-pyrophosphoryl-MurNAc-(pentapeptide)GlcNAc (lipid intermediate II). The protein is UDP-N-acetylglucosamine--N-acetylmuramyl-(pentapeptide) pyrophosphoryl-undecaprenol N-acetylglucosamine transferase of Trichlorobacter lovleyi (strain ATCC BAA-1151 / DSM 17278 / SZ) (Geobacter lovleyi).